Here is a 629-residue protein sequence, read N- to C-terminus: Pentatricopeptide repeat-containing protein At1g62930, chloroplastic (629 aa).

A chloroplast-targeting transit peptide spans 1–41 (MTSCVHLGIVASQSKKMSLAKRFAQLRKASPLFSLRGVYFS). PPR repeat units follow at residues 79–113 (SIVE…RISY), 114–148 (DLYS…GYEP), 149–183 (DIVT…EYQP), 184–218 (NTVT…GCQP), 219–253 (DLFT…KIEA), 254–288 (DVVI…GIRP), 289–323 (NVVT…KINP), 324–358 (NVVT…SIDP), 359–393 (DIFT…DCFP), 394–428 (NVVT…GLVG), 429–463 (NTVT…GVPP), 464–498 (DIIT…KMEP), 499–533 (DIYT…GVKP), 534–568 (NVII…GTLP), and 569–603 (NSGT…GFVG).

The protein belongs to the PPR family. P subfamily.

It localises to the plastid. Its subcellular location is the chloroplast. In Arabidopsis thaliana (Mouse-ear cress), this protein is Pentatricopeptide repeat-containing protein At1g62930, chloroplastic.